Reading from the N-terminus, the 384-residue chain is 1-deoxy-D-xylulose 5-phosphate reductoisomerase (384 aa).

The NADPH site is built by Thr-10, Gly-11, Ser-12, Ile-13, Gly-36, and Asn-123. Lys-124 contacts 1-deoxy-D-xylulose 5-phosphate. Glu-125 is a binding site for NADPH. A Mn(2+)-binding site is contributed by Asp-149. Residues Ser-150, Glu-151, Ser-175, and His-198 each coordinate 1-deoxy-D-xylulose 5-phosphate. Residue Glu-151 participates in Mn(2+) binding. Residue Gly-204 coordinates NADPH. 4 residues coordinate 1-deoxy-D-xylulose 5-phosphate: Ser-211, Asn-216, Lys-217, and Glu-220. Glu-220 provides a ligand contact to Mn(2+).

It belongs to the DXR family. The cofactor is Mg(2+). It depends on Mn(2+) as a cofactor.

It catalyses the reaction 2-C-methyl-D-erythritol 4-phosphate + NADP(+) = 1-deoxy-D-xylulose 5-phosphate + NADPH + H(+). The protein operates within isoprenoid biosynthesis; isopentenyl diphosphate biosynthesis via DXP pathway; isopentenyl diphosphate from 1-deoxy-D-xylulose 5-phosphate: step 1/6. In terms of biological role, catalyzes the NADPH-dependent rearrangement and reduction of 1-deoxy-D-xylulose-5-phosphate (DXP) to 2-C-methyl-D-erythritol 4-phosphate (MEP). This chain is 1-deoxy-D-xylulose 5-phosphate reductoisomerase, found in Chlorobium phaeovibrioides (strain DSM 265 / 1930) (Prosthecochloris vibrioformis (strain DSM 265)).